Here is a 391-residue protein sequence, read N- to C-terminus: Succinate--CoA ligase [ADP-forming] subunit beta (391 aa).

In terms of domain architecture, ATP-grasp spans 9 to 245 (KQIFAKYGVP…ISEEDADERE (237 aa)). Residues Lys-46, 53-55 (GRG), Glu-99, Ala-102, and Glu-107 contribute to the ATP site. Mg(2+)-binding residues include Asn-200 and Asp-214. Substrate-binding positions include Asn-265 and 322-324 (GIV).

It belongs to the succinate/malate CoA ligase beta subunit family. In terms of assembly, heterotetramer of two alpha and two beta subunits. Mg(2+) serves as cofactor.

The enzyme catalyses succinate + ATP + CoA = succinyl-CoA + ADP + phosphate. The catalysed reaction is GTP + succinate + CoA = succinyl-CoA + GDP + phosphate. Its pathway is carbohydrate metabolism; tricarboxylic acid cycle; succinate from succinyl-CoA (ligase route): step 1/1. Succinyl-CoA synthetase functions in the citric acid cycle (TCA), coupling the hydrolysis of succinyl-CoA to the synthesis of either ATP or GTP and thus represents the only step of substrate-level phosphorylation in the TCA. The beta subunit provides nucleotide specificity of the enzyme and binds the substrate succinate, while the binding sites for coenzyme A and phosphate are found in the alpha subunit. The sequence is that of Succinate--CoA ligase [ADP-forming] subunit beta from Sulfurimonas denitrificans (strain ATCC 33889 / DSM 1251) (Thiomicrospira denitrificans (strain ATCC 33889 / DSM 1251)).